A 531-amino-acid polypeptide reads, in one-letter code: Transcription termination/antitermination protein NusA (531 aa).

Residues 165 to 235 (GEVIEAKVED…SLWPITLSRS (71 aa)) enclose the S1 motif domain. Residues 340-410 (DTSIEVVVPA…FGIKKRREKI (71 aa)) form the KH domain. Basic and acidic residues predominate over residues 463–475 (EKQVTPKEKEKVQ). Residues 463–531 (EKQVTPKEKE…KQTFDSFDDL (69 aa)) form a disordered region. A compositionally biased stretch (basic residues) spans 476-490 (PKAKVHSNSHSKKPA). Positions 502-512 (ASDKNLKKDQV) are enriched in basic and acidic residues. Over residues 513-531 (DNNQTNPQTKQTFDSFDDL) the composition is skewed to polar residues.

The protein belongs to the NusA family. As to quaternary structure, monomer. Binds directly to the core enzyme of the DNA-dependent RNA polymerase and to nascent RNA.

It localises to the cytoplasm. Functionally, participates in both transcription termination and antitermination. In Mycoplasma genitalium (strain ATCC 33530 / DSM 19775 / NCTC 10195 / G37) (Mycoplasmoides genitalium), this protein is Transcription termination/antitermination protein NusA.